We begin with the raw amino-acid sequence, 913 residues long: E3 ubiquitin-protein ligase ZNRF3 (913 aa).

The disordered stretch occupies residues 1 to 32 (MRPRSGGRPGAPGRRRRRLRRGPRGRRLPPPP). The N-terminal stretch at 1–52 (MRPRSGGRPGAPGRRRRRLRRGPRGRRLPPPPPLPLLLGLLLAAAGPGAARA) is a signal peptide. Positions 13–27 (GRRRRRLRRGPRGRR) are enriched in basic residues. Topologically, residues 53–216 (KETAFVEVVL…PRQPTEYFDM (164 aa)) are extracellular. A helical membrane pass occupies residues 217–237 (GIFLAFFVVVSLVCLILLVKI). The Cytoplasmic portion of the chain corresponds to 238–913 (KLKQRRSQNS…GSGPGIGTGA (676 aa)). The RING-type; atypical zinc-finger motif lies at 290-331 (CAICLEKYIDGEELRVIPCTHRFHRKCVDPWLLQHHTCPHCR). Disordered regions lie at residues 601-669 (AVHL…GLEV) and 855-913 (REEE…GTGA). Composition is skewed to polar residues over residues 634–664 (SGDQ…STSE) and 881–890 (ASLSSAPQDT). The span at 903 to 913 (PGSGPGIGTGA) shows a compositional bias: gly residues.

This sequence belongs to the ZNRF3 family. Interacts with LRP6, FZD4, FZD5, FZD6 and FZD8. Interacts with RSPO1; interaction promotes indirect interaction with LGR4 and membrane clearance of ZNRF3. Interacts with LMBR1L.

Its subcellular location is the cell membrane. It carries out the reaction S-ubiquitinyl-[E2 ubiquitin-conjugating enzyme]-L-cysteine + [acceptor protein]-L-lysine = [E2 ubiquitin-conjugating enzyme]-L-cysteine + N(6)-ubiquitinyl-[acceptor protein]-L-lysine.. The protein operates within protein modification; protein ubiquitination. Negatively regulated by R-spondin proteins such as RSPO1: interaction with RSPO1 induces the indirect association between ZNRF3 and LGR4, promoting membrane clearance of ZNRF3. In terms of biological role, E3 ubiquitin-protein ligase that acts as a negative regulator of the Wnt signaling pathway by mediating the ubiquitination and subsequent degradation of Wnt receptor complex components Frizzled and LRP6. Acts on both canonical and non-canonical Wnt signaling pathway. Acts as a tumor suppressor in the intestinal stem cell zone by inhibiting the Wnt signaling pathway, thereby restricting the size of the intestinal stem cell zone. Along with RSPO2 and RNF43, constitutes a master switch that governs limb specification. The chain is E3 ubiquitin-protein ligase ZNRF3 (Znrf3) from Mus musculus (Mouse).